We begin with the raw amino-acid sequence, 419 residues long: Peptide chain release factor subunit 1 (419 aa).

It belongs to the eukaryotic release factor 1 family. As to quaternary structure, heterodimer of two subunits, one of which binds GTP.

It localises to the cytoplasm. Functionally, directs the termination of nascent peptide synthesis (translation) in response to the termination codons UAA, UAG and UGA. The chain is Peptide chain release factor subunit 1 from Methanococcus vannielii (strain ATCC 35089 / DSM 1224 / JCM 13029 / OCM 148 / SB).